The sequence spans 323 residues: Ficolin-2 (323 aa).

An N-terminal signal peptide occupies residues 1–26 (MDTRGVAAAMRPLVLLVAFLCTAAPA). The Collagen-like domain maps to 52–102 (GLPGAAGPKGEAGASGPKGGQGPPGAPGEPGPPGPKGDRGEKGEPGPKGES). Low complexity predominate over residues 55–66 (GAAGPKGEAGAS). Residues 55 to 107 (GAAGPKGEAGASGPKGGQGPPGAPGEPGPPGPKGDRGEKGEPGPKGESWETEQ) form a disordered region. Positions 75-86 (PGAPGEPGPPGP) are enriched in pro residues. Basic and acidic residues predominate over residues 87–102 (KGDRGEKGEPGPKGES). The Fibrinogen C-terminal domain occupies 106–323 (EQCLTGPRTC…KVSEMKFRAT (218 aa)). 2 disulfide bridges follow: Cys108/Cys136 and Cys115/Cys143. Asn249 carries N-linked (GlcNAc...) asparagine glycosylation. Positions 259, 261, and 265 each coordinate Ca(2+). Residues Cys267 and Cys280 are joined by a disulfide bond. 2 N-linked (GlcNAc...) asparagine glycosylation sites follow: Asn302 and Asn310.

It belongs to the ficolin lectin family. Homotrimer. Interacts with elastin. Interacts with MASP1 and MASP2. In terms of tissue distribution, mainly expressed in skeletal muscle.

The protein localises to the secreted. Functionally, may function in innate immunity through activation of the lectin complement pathway. Calcium-dependent and GlcNAc-binding lectin. This chain is Ficolin-2 (FCN2), found in Sus scrofa (Pig).